Consider the following 702-residue polypeptide: SAGA complex subunit NGG1 (702 aa).

A compositionally biased stretch (basic residues) spans 1-10 (MPRHGRRGKL). Disordered regions lie at residues 1–29 (MPRHGRRGKLPKGEKLPKKEGGDNTPSKL) and 90–224 (LRKI…VKNP). Composition is skewed to basic and acidic residues over residues 11-22 (PKGEKLPKKEGG) and 90-108 (LRKIRDSKNEKQANDEKQE). Polar residues predominate over residues 109–125 (TSNADGQHESSTATEET). S134 bears the Phosphoserine mark. Residues 162–219 (MAKEEINEDKDLQVHRDQPREKRPFDSETENRATENENTQRPDNKKQKIDVDKMENDP) are compositionally biased toward basic and acidic residues. At S407 the chain carries Phosphoserine. T464 is subject to Phosphothreonine. Positions 606–618 (KRIRVPKKRKKHH) match the Nuclear localization signal motif. 2 disordered regions span residues 611 to 636 (PKKRKKHHTAASNNVNTGTTSQIAQQ) and 672 to 702 (NESVFKDMDQEEDEDEADVFAQNTNKDVELN). The span at 620–636 (AASNNVNTGTTSQIAQQ) shows a compositional bias: polar residues. Over residues 680–689 (DQEEDEDEAD) the composition is skewed to acidic residues.

It belongs to the NGG1 family. Component of the 1.8 MDa SAGA (Spt-Ada-Gcn5 acetyltransferase) complex, which is composed of 19 subunits TRA1, SPT7, TAF5, NGG1/ADA3, SGF73, SPT20/ADA5, SPT8, TAF12, TAF6, HFI1/ADA1, UBP8, GCN5, ADA2, SPT3, SGF29, TAF10, TAF9, SGF11 and SUS1. The SAGA complex is composed of 4 modules, namely the HAT (histone acetyltransferase) module (GCN5, ADA2, NGG1/ADA3 and SGF29), the DUB (deubiquitinating) module (UBP8, SGF11, SGF73 and SUS1), the core or TAF (TBP-associated factor) module (TAF5, TAF6, TAF9, TAF10 and TAF12), and the Tra1 or SPT (Suppressor of Ty) module (TRA1, HFI1/ADA1, SPT3, SPT7, SPT8 and SPT20/ADA5). The Tra1/SPT module binds activators, the core module recruits TBP (TATA-binding protein), the HAT module contains the histone H3 acetyltransferase GCN5, and the DUB module comprises the histone H2B deubiquitinase UBP8. Also identified in an altered form of SAGA, named SALSA (SAGA altered, Spt8 absent) or SLIK (SAGA-like) complex, which contains a C-terminal truncated form of SPT7 and is missing SPT8. However, it has been shown that the SAGA and SAGA-like SALSA/SLIK transcriptional coactivators are structurally and biochemically equivalent. Component of the 0.8 MDa ADA complex, a HAT complex distinct from SAGA, which at least consists of ADA2, NGG1/ADA3, AHC1, AHC2, SGF29 and GCN5. Identified in an Ada.spt complex with SPT7 and TRA1. Component of an ADA/GCN5 complex that consists of HFI1/ADA1, ADA2, NGG1/ADA3, SPT20/ADA5 and GCN5 and probably is a subcomplex of SAGA.

Its subcellular location is the nucleus. In terms of biological role, component of the transcription coactivator SAGA complex. SAGA acts as a general cofactor required for essentially all RNA polymerase II transcription. At the promoters, SAGA is required for transcription pre-initiation complex (PIC) recruitment. It influences RNA polymerase II transcriptional activity through different activities such as TBP interaction (via core/TAF module) and promoter selectivity, interaction with transcription activators (via Tra1/SPT module), and chromatin modification through histone acetylation (via HAT module) and deubiquitination (via DUB module). SAGA preferentially acetylates histones H3 (to form H3K9ac, H3K14ac, H3K18ac and H3K23ac) and H2B and deubiquitinates histone H2B. SAGA interacts with DNA via upstream activating sequences (UASs). Also identified in a modified version of SAGA named SALSA or SLIK. The cleavage of SPT7 and the absence of the SPT8 subunit in SLIK neither drive any major conformational differences in its structure compared with SAGA, nor significantly affect HAT, DUB, or DNA-binding activities. Component of the ADA histone acetyltransferase complex, which preferentially acetylates nucleosomal histones H3 (to form H3K14ac and H3K18ac) and H2B. May be involved in response to DNA damage by genotoxic agents. The polypeptide is SAGA complex subunit NGG1 (NGG1) (Saccharomyces cerevisiae (strain ATCC 204508 / S288c) (Baker's yeast)).